The following is a 247-amino-acid chain: UPF0309 protein LMOf2365_2617 (247 aa).

Positions 31 to 214 (VAESIENDGV…ETMVNDNFTP (184 aa)) constitute an SIS domain.

Belongs to the UPF0309 family.

In Listeria monocytogenes serotype 4b (strain F2365), this protein is UPF0309 protein LMOf2365_2617.